The chain runs to 431 residues: Glutamate-1-semialdehyde 2,1-aminomutase (431 aa).

N6-(pyridoxal phosphate)lysine is present on lysine 269.

It belongs to the class-III pyridoxal-phosphate-dependent aminotransferase family. HemL subfamily. Homodimer. The cofactor is pyridoxal 5'-phosphate.

It is found in the cytoplasm. It catalyses the reaction (S)-4-amino-5-oxopentanoate = 5-aminolevulinate. It participates in porphyrin-containing compound metabolism; protoporphyrin-IX biosynthesis; 5-aminolevulinate from L-glutamyl-tRNA(Glu): step 2/2. It functions in the pathway porphyrin-containing compound metabolism; chlorophyll biosynthesis. This Pelodictyon phaeoclathratiforme (strain DSM 5477 / BU-1) protein is Glutamate-1-semialdehyde 2,1-aminomutase.